Reading from the N-terminus, the 93-residue chain is Small ribosomal subunit protein uS19 (93 aa).

The protein belongs to the universal ribosomal protein uS19 family.

Protein S19 forms a complex with S13 that binds strongly to the 16S ribosomal RNA. The protein is Small ribosomal subunit protein uS19 of Nitratidesulfovibrio vulgaris (strain ATCC 29579 / DSM 644 / CCUG 34227 / NCIMB 8303 / VKM B-1760 / Hildenborough) (Desulfovibrio vulgaris).